The following is a 283-amino-acid chain: Formamidopyrimidine-DNA glycosylase (283 aa).

The active-site Schiff-base intermediate with DNA is the proline 2. Catalysis depends on glutamate 3, which acts as the Proton donor. Residue lysine 60 is the Proton donor; for beta-elimination activity of the active site. 3 residues coordinate DNA: histidine 100, arginine 119, and arginine 164. An FPG-type zinc finger spans residues 249–283 (WVYGRENKPCRKCGVKILKAKVAGRGTHWCPNCQK). Catalysis depends on arginine 273, which acts as the Proton donor; for delta-elimination activity.

It belongs to the FPG family. In terms of assembly, monomer. Zn(2+) is required as a cofactor.

It carries out the reaction Hydrolysis of DNA containing ring-opened 7-methylguanine residues, releasing 2,6-diamino-4-hydroxy-5-(N-methyl)formamidopyrimidine.. The enzyme catalyses 2'-deoxyribonucleotide-(2'-deoxyribose 5'-phosphate)-2'-deoxyribonucleotide-DNA = a 3'-end 2'-deoxyribonucleotide-(2,3-dehydro-2,3-deoxyribose 5'-phosphate)-DNA + a 5'-end 5'-phospho-2'-deoxyribonucleoside-DNA + H(+). Functionally, involved in base excision repair of DNA damaged by oxidation or by mutagenic agents. Acts as a DNA glycosylase that recognizes and removes damaged bases. Has a preference for oxidized purines, such as 7,8-dihydro-8-oxoguanine (8-oxoG). Has AP (apurinic/apyrimidinic) lyase activity and introduces nicks in the DNA strand. Cleaves the DNA backbone by beta-delta elimination to generate a single-strand break at the site of the removed base with both 3'- and 5'-phosphates. The protein is Formamidopyrimidine-DNA glycosylase of Prochlorococcus marinus (strain SARG / CCMP1375 / SS120).